A 376-amino-acid polypeptide reads, in one-letter code: Alanine racemase (376 aa).

Lysine 44 serves as the catalytic Proton acceptor; specific for D-alanine. Residue lysine 44 is modified to N6-(pyridoxal phosphate)lysine. Arginine 139 provides a ligand contact to substrate. Tyrosine 271 acts as the Proton acceptor; specific for L-alanine in catalysis. Position 319 (methionine 319) interacts with substrate.

The protein belongs to the alanine racemase family. It depends on pyridoxal 5'-phosphate as a cofactor.

It carries out the reaction L-alanine = D-alanine. Its pathway is amino-acid biosynthesis; D-alanine biosynthesis; D-alanine from L-alanine: step 1/1. Catalyzes the interconversion of L-alanine and D-alanine. May also act on other amino acids. The chain is Alanine racemase (alr) from Bordetella petrii (strain ATCC BAA-461 / DSM 12804 / CCUG 43448).